A 288-amino-acid polypeptide reads, in one-letter code: ATP synthase gamma chain (288 aa).

The protein belongs to the ATPase gamma chain family. As to quaternary structure, F-type ATPases have 2 components, CF(1) - the catalytic core - and CF(0) - the membrane proton channel. CF(1) has five subunits: alpha(3), beta(3), gamma(1), delta(1), epsilon(1). CF(0) has three main subunits: a, b and c.

Its subcellular location is the cell membrane. Functionally, produces ATP from ADP in the presence of a proton gradient across the membrane. The gamma chain is believed to be important in regulating ATPase activity and the flow of protons through the CF(0) complex. The sequence is that of ATP synthase gamma chain from Staphylococcus haemolyticus (strain JCSC1435).